The sequence spans 399 residues: Elongation factor Tu (399 aa).

One can recognise a tr-type G domain in the interval 10-204 (KPHVNIGTIG…AVDANIPEPV (195 aa)). Residues 19-26 (GHVDHGKT) are G1. 19 to 26 (GHVDHGKT) provides a ligand contact to GTP. Thr-26 is a Mg(2+) binding site. A G2 region spans residues 60 to 64 (GITIN). Positions 81–84 (DCPG) are G3. GTP-binding positions include 81–85 (DCPGH) and 136–139 (NKCD). The interval 136–139 (NKCD) is G4. The segment at 174-176 (SGL) is G5.

This sequence belongs to the TRAFAC class translation factor GTPase superfamily. Classic translation factor GTPase family. EF-Tu/EF-1A subfamily. Monomer.

The protein resides in the cytoplasm. The enzyme catalyses GTP + H2O = GDP + phosphate + H(+). Its function is as follows. GTP hydrolase that promotes the GTP-dependent binding of aminoacyl-tRNA to the A-site of ribosomes during protein biosynthesis. In Synechococcus sp. (strain RCC307), this protein is Elongation factor Tu.